The chain runs to 846 residues: Vinculin (846 aa).

The interaction with TLN stretch occupies residues 1–257 (MPVKFHTKTL…VLQLTTTFEE (257 aa)). Residues 315 to 370 (RAKLLAAADELDQILKELEELQAKGLGDSRQARALAHAAAVKLQELEQEIRKALAE) adopt a coiled-coil conformation. The interval 617–646 (WVPPRPPLPELEEEEEPPELPPPPEDPASL) is disordered.

Belongs to the vinculin/alpha-catenin family. As to quaternary structure, monomer. Interacts with TLN (talin); the interaction facilitates VIN1 binding to F-actin. Expressed in epithelial tissues, specifically the pinacoderm (outer epithelium) and choanoderm (feeding epithelium) (at protein level). Also detected in migratory cells of the mesohyl (at protein level).

Its subcellular location is the cytoplasm. The protein resides in the cell cortex. It localises to the cell projection. The protein localises to the filopodium. It is found in the cytoskeleton. Its function is as follows. Actin filament (F-actin)-binding protein which may play a role in cell-cell adhesion. The protein is Vinculin of Oscarella pearsei (Sponge).